The primary structure comprises 430 residues: Phosphomethylpyrimidine synthase (430 aa).

Substrate is bound by residues N67, M96, Y125, H161, 183-185 (SRG), 224-227 (DALR), and E263. A Zn(2+)-binding site is contributed by H267. Y290 serves as a coordination point for substrate. H331 serves as a coordination point for Zn(2+). Positions 406, 409, and 413 each coordinate [4Fe-4S] cluster.

It belongs to the ThiC family. In terms of assembly, homodimer. Requires [4Fe-4S] cluster as cofactor.

It carries out the reaction 5-amino-1-(5-phospho-beta-D-ribosyl)imidazole + S-adenosyl-L-methionine = 4-amino-2-methyl-5-(phosphooxymethyl)pyrimidine + CO + 5'-deoxyadenosine + formate + L-methionine + 3 H(+). The protein operates within cofactor biosynthesis; thiamine diphosphate biosynthesis. Functionally, catalyzes the synthesis of the hydroxymethylpyrimidine phosphate (HMP-P) moiety of thiamine from aminoimidazole ribotide (AIR) in a radical S-adenosyl-L-methionine (SAM)-dependent reaction. In Campylobacter jejuni (strain RM1221), this protein is Phosphomethylpyrimidine synthase.